We begin with the raw amino-acid sequence, 602 residues long: Elongation factor 4 (602 aa).

A tr-type G domain is found at 7 to 189; it reads KYIRNFSIVA…AIVSKVPAPY (183 aa). Residues 19 to 24 and 136 to 139 each bind GTP; these read DHGKST and NKID.

Belongs to the TRAFAC class translation factor GTPase superfamily. Classic translation factor GTPase family. LepA subfamily.

The protein resides in the cell membrane. It catalyses the reaction GTP + H2O = GDP + phosphate + H(+). Its function is as follows. Required for accurate and efficient protein synthesis under certain stress conditions. May act as a fidelity factor of the translation reaction, by catalyzing a one-codon backward translocation of tRNAs on improperly translocated ribosomes. Back-translocation proceeds from a post-translocation (POST) complex to a pre-translocation (PRE) complex, thus giving elongation factor G a second chance to translocate the tRNAs correctly. Binds to ribosomes in a GTP-dependent manner. The sequence is that of Elongation factor 4 from Clostridium botulinum (strain Loch Maree / Type A3).